Consider the following 208-residue polypeptide: MTKGILGKKVGMTQIFTESGEFIPVTVIEATPNVVLQVKTVETDGYEAVQVGFDDKREVLSNKPAKGHVAKANTAPKRFIREFKNIEGLEVGSEITVESFSAGDVVDVTGTSKGKGFQGVIKRHGQSRGPMAHGSRYHRRPGSMGPVAPNRVFKNKHLAGRMGGNRVTIQNLEIVQVIPEKNVILIKGNVPGAKKSLITIKSAVKAAK.

The disordered stretch occupies residues 123 to 147 (RHGQSRGPMAHGSRYHRRPGSMGPV).

This sequence belongs to the universal ribosomal protein uL3 family. As to quaternary structure, part of the 50S ribosomal subunit. Forms a cluster with proteins L14 and L19.

One of the primary rRNA binding proteins, it binds directly near the 3'-end of the 23S rRNA, where it nucleates assembly of the 50S subunit. This chain is Large ribosomal subunit protein uL3, found in Streptococcus uberis (strain ATCC BAA-854 / 0140J).